The following is a 65-amino-acid chain: Large ribosomal subunit protein bL35 (65 aa).

The segment at 23 to 44 (KRMKAGKQHILTKKSQKTKRNL) is disordered.

It belongs to the bacterial ribosomal protein bL35 family.

This chain is Large ribosomal subunit protein bL35, found in Lachnoclostridium phytofermentans (strain ATCC 700394 / DSM 18823 / ISDg) (Clostridium phytofermentans).